Here is a 288-residue protein sequence, read N- to C-terminus: DegV domain-containing protein SAS0714 (288 aa).

The 280-residue stretch at 3 to 282 (IAVMTDSTSY…SGGLGLGYVG (280 aa)) folds into the DegV domain. Residues T62 and S95 each coordinate hexadecanoate.

In terms of biological role, may bind long-chain fatty acids, such as palmitate, and may play a role in lipid transport or fatty acid metabolism. The polypeptide is DegV domain-containing protein SAS0714 (Staphylococcus aureus (strain MSSA476)).